A 254-amino-acid chain; its full sequence is Type III pantothenate kinase (254 aa).

Residue 6–13 (DVGNTNTV) participates in ATP binding. Residues tyrosine 100 and 107–110 (GADR) contribute to the substrate site. Aspartate 109 functions as the Proton acceptor in the catalytic mechanism. Aspartate 129 contacts K(+). An ATP-binding site is contributed by threonine 132. Substrate is bound at residue threonine 184.

This sequence belongs to the type III pantothenate kinase family. In terms of assembly, homodimer. The cofactor is NH4(+). K(+) is required as a cofactor.

The protein resides in the cytoplasm. It carries out the reaction (R)-pantothenate + ATP = (R)-4'-phosphopantothenate + ADP + H(+). Its pathway is cofactor biosynthesis; coenzyme A biosynthesis; CoA from (R)-pantothenate: step 1/5. Its function is as follows. Catalyzes the phosphorylation of pantothenate (Pan), the first step in CoA biosynthesis. The polypeptide is Type III pantothenate kinase (Anaeromyxobacter sp. (strain Fw109-5)).